The following is a 299-amino-acid chain: tRNA dimethylallyltransferase (299 aa).

An ATP-binding site is contributed by 13–20 (GPTASGKT). 15 to 20 (TASGKT) provides a ligand contact to substrate. The interaction with substrate tRNA stretch occupies residues 38-41 (DSRQ).

The protein belongs to the IPP transferase family. Monomer. The cofactor is Mg(2+).

The catalysed reaction is adenosine(37) in tRNA + dimethylallyl diphosphate = N(6)-dimethylallyladenosine(37) in tRNA + diphosphate. Functionally, catalyzes the transfer of a dimethylallyl group onto the adenine at position 37 in tRNAs that read codons beginning with uridine, leading to the formation of N6-(dimethylallyl)adenosine (i(6)A). In Prochlorococcus marinus (strain MIT 9301), this protein is tRNA dimethylallyltransferase.